Consider the following 805-residue polypeptide: Kinesin-like protein KIP3 (805 aa).

Positions 10-438 (SIVVAIRVRP…LKYANRAKEI (429 aa)) constitute a Kinesin motor domain. 192 to 199 (GATGCGKT) serves as a coordination point for ATP. The stretch at 449–481 (LSRHVGSYLKMITEQKRQIEELREREEKMISLK) forms a coiled coil. The disordered stretch occupies residues 720–805 (NFSQKKVKWT…HQSLLATARK (86 aa)). The segment covering 764-773 (MQDTTFNEQG) has biased composition (polar residues). A compositionally biased stretch (low complexity) spans 774–783 (PSTPSAPTTA). Residues 792-805 (SLLTHQSLLATARK) are compositionally biased toward polar residues.

The protein belongs to the TRAFAC class myosin-kinesin ATPase superfamily. Kinesin family. Kinesin II subfamily.

The protein resides in the cytoplasm. It is found in the cytoskeleton. The chain is Kinesin-like protein KIP3 (KIP3) from Saccharomyces cerevisiae (strain ATCC 204508 / S288c) (Baker's yeast).